Consider the following 359-residue polypeptide: MGDGPNWRSLPEPSRFVGSDPSPPVPRAPGGDTCPVGLAVIDAPWGVRAGPVLFRAPVQGSAKIAVARMLERGEGMTDQRHCYAGVDWASESHHVFLTDGDGRKIGERVFRHGGEGLAEMAAWLMATSGAVEGDEIQVAIEVPHGPVVETLIERGFKVNAINPKQMDRFRDRFTMAGAKDDSRDAEVMASALRTDPRCFRLLAVSDPVVIELREWSRIAEDLSAERNRLTNRMREQLWRYFPALLELENDLGAEWLLDLWDTVPTPDKAARIREATIAKLLKRHRIRRFDAPPCARYIAPAAAQGRRRNDRIRQRPRHYAHCPHPPRQPAAQTGASSAGWPDRQPHRNRAGGAGAEEAA.

2 disordered regions span residues 1–31 (MGDG…APGG) and 318–359 (HYAH…EEAA).

Belongs to the transposase 9 family.

This chain is Putative transposase y4uE, found in Sinorhizobium fredii (strain NBRC 101917 / NGR234).